The following is a 368-amino-acid chain: 2-aminoethylphosphonate--pyruvate transaminase (368 aa).

Residue Lys192 is modified to N6-(pyridoxal phosphate)lysine.

It belongs to the class-V pyridoxal-phosphate-dependent aminotransferase family. PhnW subfamily. Homodimer. It depends on pyridoxal 5'-phosphate as a cofactor.

The catalysed reaction is (2-aminoethyl)phosphonate + pyruvate = phosphonoacetaldehyde + L-alanine. In terms of biological role, involved in phosphonate degradation. The chain is 2-aminoethylphosphonate--pyruvate transaminase from Pseudomonas entomophila (strain L48).